The chain runs to 247 residues: 2,3-bisphosphoglycerate-dependent phosphoglycerate mutase (247 aa).

Residues 8 to 15 (RHGESTWN), 21 to 22 (TG), arginine 60, 87 to 90 (ERHY), lysine 98, 114 to 115 (RR), and 183 to 184 (GN) each bind substrate. The Tele-phosphohistidine intermediate role is filled by histidine 9. The Proton donor/acceptor role is filled by glutamate 87.

Belongs to the phosphoglycerate mutase family. BPG-dependent PGAM subfamily. Homodimer.

The catalysed reaction is (2R)-2-phosphoglycerate = (2R)-3-phosphoglycerate. It participates in carbohydrate degradation; glycolysis; pyruvate from D-glyceraldehyde 3-phosphate: step 3/5. Functionally, catalyzes the interconversion of 2-phosphoglycerate and 3-phosphoglycerate. The polypeptide is 2,3-bisphosphoglycerate-dependent phosphoglycerate mutase (Acidovorax ebreus (strain TPSY) (Diaphorobacter sp. (strain TPSY))).